Consider the following 424-residue polypeptide: Glutamate-1-semialdehyde 2,1-aminomutase (424 aa).

N6-(pyridoxal phosphate)lysine is present on lysine 263.

It belongs to the class-III pyridoxal-phosphate-dependent aminotransferase family. HemL subfamily. As to quaternary structure, homodimer. Requires pyridoxal 5'-phosphate as cofactor.

It is found in the cytoplasm. The enzyme catalyses (S)-4-amino-5-oxopentanoate = 5-aminolevulinate. Its pathway is porphyrin-containing compound metabolism; protoporphyrin-IX biosynthesis; 5-aminolevulinate from L-glutamyl-tRNA(Glu): step 2/2. This is Glutamate-1-semialdehyde 2,1-aminomutase from Campylobacter jejuni (strain RM1221).